The chain runs to 294 residues: tRNA dimethylallyltransferase (294 aa).

10–17 contributes to the ATP binding site; the sequence is GPTAVGKT. 12–17 lines the substrate pocket; the sequence is TAVGKT. Residues 35–38 form an interaction with substrate tRNA region; that stretch reads DSQQ.

The protein belongs to the IPP transferase family. In terms of assembly, monomer. It depends on Mg(2+) as a cofactor.

It catalyses the reaction adenosine(37) in tRNA + dimethylallyl diphosphate = N(6)-dimethylallyladenosine(37) in tRNA + diphosphate. In terms of biological role, catalyzes the transfer of a dimethylallyl group onto the adenine at position 37 in tRNAs that read codons beginning with uridine, leading to the formation of N6-(dimethylallyl)adenosine (i(6)A). This is tRNA dimethylallyltransferase from Streptococcus suis (strain 05ZYH33).